The following is a 501-amino-acid chain: Cobyric acid synthase (501 aa).

The 198-residue stretch at 253–450 folds into the GATase cobBQ-type domain; sequence EIEIAVLKLP…LHGIFENGRW (198 aa). Cys334 serves as the catalytic Nucleophile. The active site involves His442.

It belongs to the CobB/CobQ family. CobQ subfamily.

It participates in cofactor biosynthesis; adenosylcobalamin biosynthesis. Functionally, catalyzes amidations at positions B, D, E, and G on adenosylcobyrinic A,C-diamide. NH(2) groups are provided by glutamine, and one molecule of ATP is hydrogenolyzed for each amidation. The sequence is that of Cobyric acid synthase from Prochlorococcus marinus (strain MIT 9313).